Consider the following 872-residue polypeptide: Chaperone protein ClpB 2 (872 aa).

Positions 6–148 constitute a Clp R domain; sequence PNQFTEKAWE…KNIIKQVRGS (143 aa). Repeat stretches follow at residues 9-73 and 85-148; these read FTEK…IQRQ and LGRS…VRGS. The tract at residues 161–342 is NBD1; it reads QSLEKYGRDL…RRFQQVYVDQ (182 aa). Residue 208 to 215 participates in ATP binding; it reads GEPGVGKT. The interval 343 to 551 is linker; it reads PSVEDTISIL…IAEIISKWTG (209 aa). Positions 393–527 form a coiled coil; it reads IDLVDEAAAR…TERELSQTQG (135 aa). The segment at 561-772 is NBD2; the sequence is EKEKLLHLED…RIDEVIIFHS (212 aa). 611-618 lines the ATP pocket; it reads GPTGVGKT. The tract at residues 773 to 872 is C-terminal; that stretch reads LDKKELRQIV…SRLPVEVFSS (100 aa).

Belongs to the ClpA/ClpB family. As to quaternary structure, homohexamer. The oligomerization is ATP-dependent.

It is found in the cytoplasm. In terms of biological role, part of a stress-induced multi-chaperone system, it is involved in the recovery of the cell from heat-induced damage, in cooperation with DnaK, DnaJ and GrpE. Acts before DnaK, in the processing of protein aggregates. Protein binding stimulates the ATPase activity; ATP hydrolysis unfolds the denatured protein aggregates, which probably helps expose new hydrophobic binding sites on the surface of ClpB-bound aggregates, contributing to the solubilization and refolding of denatured protein aggregates by DnaK. The chain is Chaperone protein ClpB 2 (clpB2) from Nostoc sp. (strain PCC 7120 / SAG 25.82 / UTEX 2576).